A 398-amino-acid chain; its full sequence is Pheromone receptor transcription activator (398 aa).

Disordered stretches follow at residues 1 to 30 (MMDERKLSNFQIDGEKAYTGSSQGNSYLED), 101 to 125 (TDQNESQASQAKQSSAQLSDSESGY), and 254 to 317 (PSTG…DRPP). An MADS-box domain is found at 20-74 (GSSQGNSYLEDRQKRQNTFTKRKAGIFKKANELALLTGSEVMVLVVSETGLVHTF). The span at 106-121 (SQASQAKQSSAQLSDS) shows a compositional bias: low complexity. 2 stretches are compositionally biased toward polar residues: residues 262–273 (TTGQHSVNSPPS) and 282–294 (NKSFATRSEPQTP).

The protein resides in the nucleus. Functionally, in response to mating-pheromone signaling or nitrogen starvation, it interacts with mat1-Pc. This activates the expression of one of two mating-type-specific genes sxa2 or map3, which leads to inactivation of the P-factor. May also interact with mat1-Mc. This Schizosaccharomyces pombe (strain 972 / ATCC 24843) (Fission yeast) protein is Pheromone receptor transcription activator (map1).